The following is a 243-amino-acid chain: Beta-glucanase (243 aa).

Positions Met1–Ala27 are cleaved as a signal peptide. The GH16 domain occupies Ala29–Arg243. Cys61 and Cys90 are joined by a disulfide. Catalysis depends on Glu134, which acts as the Nucleophile. Glu138 acts as the Proton donor in catalysis.

Belongs to the glycosyl hydrolase 16 family.

The enzyme catalyses Hydrolysis of (1-&gt;4)-beta-D-glucosidic linkages in beta-D-glucans containing (1-&gt;3)- and (1-&gt;4)-bonds.. This Bacillus licheniformis protein is Beta-glucanase (bg1).